A 77-amino-acid chain; its full sequence is MKEQKWIHEGLITESLPNGMFRVRLDNEDLILGYVSGRIRRSFIRILPGDRVKIEVSRYDSTRGRIIYRLRNKDSND.

The region spanning 1-71 is the S1-like domain; the sequence is MKEQKWIHEG…TRGRIIYRLR (71 aa).

It belongs to the IF-1 family. As to quaternary structure, component of the 30S ribosomal translation pre-initiation complex which assembles on the 30S ribosome in the order IF-2 and IF-3, IF-1 and N-formylmethionyl-tRNA(fMet); mRNA recruitment can occur at any time during PIC assembly.

The protein localises to the plastid. The protein resides in the chloroplast. One of the essential components for the initiation of protein synthesis. Stabilizes the binding of IF-2 and IF-3 on the 30S subunit to which N-formylmethionyl-tRNA(fMet) subsequently binds. Helps modulate mRNA selection, yielding the 30S pre-initiation complex (PIC). Upon addition of the 50S ribosomal subunit IF-1, IF-2 and IF-3 are released leaving the mature 70S translation initiation complex. In Nandina domestica (Heavenly bamboo), this protein is Translation initiation factor IF-1, chloroplastic.